Here is a 1068-residue protein sequence, read N- to C-terminus: Huntingtin-interacting protein 1-related protein (1068 aa).

At methionine 1 the chain carries N-acetylmethionine. The region spanning 23–151 (EREQFDKTQA…SFHLKHPQFP (129 aa)) is the ENTH domain. Residues 347–599 (SVKDDRDLQI…RSSQEQGELQ (253 aa)) are a coiled coil. Disordered regions lie at residues 424–443 (LEGE…ASAT), 529–549 (ARAQ…SSRL), and 582–608 (AALS…RESQ). Basic and acidic residues-rich tracts occupy residues 425 to 443 (EGER…ASAT) and 539 to 549 (EQSKSELSSRL). Residues 590-600 (RSSQEQGELQG) show a composition bias toward low complexity. Residues 771–1012 (SLDVRQEELG…ELRKQHYVLA (242 aa)) form the I/LWEQ domain. Positions 867 to 924 (RWTEGLISASKAVGWGATQLVEAADKVVLHTGKYEELIVCSHEIAASTAQLVAASKVK) are important for actin binding. The disordered stretch occupies residues 1016–1060 (GSPGEEVAIRPSTAPRSVTTKKPPLAQKPSVAPRQDHQLDKKDGI). Residue serine 1017 is modified to Phosphoserine. Basic and acidic residues predominate over residues 1049–1059 (RQDHQLDKKDG).

The protein belongs to the SLA2 family. As to quaternary structure, homodimer. Interacts with actin; homodimerization promotes actin binding. Interacts with CLTB. Interacts with HIP1. Interacts (via ENTH and I/LWEQ domains) with BCL2L10. Brain, heart, kidney, pancreas, and liver, but not in lung or placenta.

It is found in the cytoplasm. The protein resides in the perinuclear region. It localises to the endomembrane system. The protein localises to the cytoplasmic vesicle. Its subcellular location is the clathrin-coated vesicle membrane. Component of clathrin-coated pits and vesicles, that may link the endocytic machinery to the actin cytoskeleton. Binds 3-phosphoinositides (via ENTH domain). May act through the ENTH domain to promote cell survival by stabilizing receptor tyrosine kinases following ligand-induced endocytosis. The chain is Huntingtin-interacting protein 1-related protein (HIP1R) from Homo sapiens (Human).